Consider the following 164-residue polypeptide: 4-hydroxy-4-methyl-2-oxoglutarate aldolase (164 aa).

Substrate contacts are provided by residues 74–77 and arginine 96; that span reads GGNL. An a divalent metal cation-binding site is contributed by aspartate 97.

Belongs to the class II aldolase/RraA-like family. Homotrimer. Ni(2+) serves as cofactor. Requires Co(2+) as cofactor. It depends on Zn(2+) as a cofactor.

The catalysed reaction is 4-hydroxy-4-methyl-2-oxoglutarate = 2 pyruvate. It carries out the reaction oxaloacetate + H(+) = pyruvate + CO2. Competitively inhibited by oxalate, a pyruvate enolate analog. Catalyzes the aldol cleavage of 4-hydroxy-4-methyl-2-oxoglutarate (HMG) into 2 molecules of pyruvate. Also contains a secondary oxaloacetate (OAA) decarboxylase activity due to the common pyruvate enolate transition state formed following C-C bond cleavage in the retro-aldol and decarboxylation reactions. In Thermus thermophilus (strain ATCC 27634 / DSM 579 / HB8), this protein is 4-hydroxy-4-methyl-2-oxoglutarate aldolase.